The chain runs to 529 residues: Transcription activator of gluconeogenesis ERT1 (529 aa).

The segment at 1–31 is disordered; the sequence is MCTPDENDYKTSTDPDTSANTNHTLEKKKRK. The segment covering 14 to 23 has biased composition (polar residues); the sequence is DPDTSANTNH. The zn(2)-C6 fungal-type DNA-binding region spans 40-68; it reads CVNCSRLHVSCEAKRPCLRCISKGLTATC. Residues 174–193 are compositionally biased toward low complexity; sequence SNSTIGNSSNNSPTGTNTSP. Positions 174–198 are disordered; it reads SNSTIGNSSNNSPTGTNTSPEETEM. The PAS domain maps to 408–480; it reads TLLEYVKFIA…KTLSKVAYRD (73 aa).

The protein belongs to the ERT1/acuK family.

The protein localises to the cytoplasm. It localises to the nucleus. Functionally, transcription factor which regulates nonfermentable carbon utilization. Activator of gluconeogenetic genes like PCK1. Involved in restriction of Ty1 transposition. This is Transcription activator of gluconeogenesis ERT1 (ERT1) from Saccharomyces cerevisiae (strain ATCC 204508 / S288c) (Baker's yeast).